The primary structure comprises 213 residues: 5-oxoprolinase subunit B (213 aa).

Belongs to the PxpB family. As to quaternary structure, forms a complex composed of PxpA, PxpB and PxpC.

The catalysed reaction is 5-oxo-L-proline + ATP + 2 H2O = L-glutamate + ADP + phosphate + H(+). In terms of biological role, catalyzes the cleavage of 5-oxoproline to form L-glutamate coupled to the hydrolysis of ATP to ADP and inorganic phosphate. This is 5-oxoprolinase subunit B from Haemophilus influenzae (strain ATCC 51907 / DSM 11121 / KW20 / Rd).